The sequence spans 191 residues: Transmembrane protein 17B (191 aa).

Transmembrane regions (helical) follow at residues 50-70 (MSLY…VVML), 83-103 (FILI…LYLG), 115-135 (LAGF…FQLF), and 147-167 (GVHI…FVAL).

The protein belongs to the TMEM17 family. Part of the tectonic-like complex (also named B9 complex).

The protein localises to the cell projection. The protein resides in the cilium membrane. In terms of biological role, transmembrane component of the tectonic-like complex, a complex localized at the transition zone of primary cilia and acting as a barrier that prevents diffusion of transmembrane proteins between the cilia and plasma membranes. Required for ciliogenesis and sonic hedgehog/SHH signaling. The chain is Transmembrane protein 17B (Tmem17b) from Danio rerio (Zebrafish).